We begin with the raw amino-acid sequence, 27 residues long: Nemertide alpha-8 (27 aa).

3 cysteine pairs are disulfide-bonded: Cys2-Cys16, Cys9-Cys20, and Cys15-Cys26.

This sequence belongs to the nemertide family. In terms of tissue distribution, confined to the epidermis and to the mucus layer.

The protein resides in the secreted. Its function is as follows. Highly potent toxin against both insect and some mammalian sodium channels (Nav). It potently inhibits inactivation of insect sodium channels of B.germanica (BgNav1) and also delays the inactivation of mammalian Nav with potent activity on Nav1.3/SCN3A and Nav1.4/SCN4A. 1 uM is enough to completely inhibits the inactivation, resulting in sustained non-inactivating currents. In addition, the toxin significantly enhances the recovery from inactivation, and the open state is not required for the toxin to interact with the channel. In vivo, injection into brine shrimp (Artemia salina) stops movement or causes death after 24 hours (EC(50)=0.4 uM). The protein is Nemertide alpha-8 of Riseriellus occultus (Ribbon worm).